Reading from the N-terminus, the 457-residue chain is D-hydantoinase (457 aa).

Zn(2+)-binding residues include histidine 57 and histidine 59. A Phosphoserine modification is found at serine 69. Lysine 148 is a Zn(2+) binding site. Lysine 148 carries the post-translational modification N6-carboxylysine. Tyrosine 153 provides a ligand contact to substrate. The Zn(2+) site is built by histidine 181 and histidine 237. A substrate-binding site is contributed by threonine 286. Residue aspartate 313 coordinates Zn(2+). Residue asparagine 335 participates in substrate binding.

It belongs to the metallo-dependent hydrolases superfamily. Hydantoinase/dihydropyrimidinase family. Homotetramer. Zn(2+) serves as cofactor. In terms of processing, carboxylation allows a single lysine to coordinate two zinc ions.

Its function is as follows. Catalyzes the stereospecific hydrolysis of the cyclic amide bond of D-hydantoin derivatives. In Rhizobium radiobacter (Agrobacterium tumefaciens), this protein is D-hydantoinase (hyuA).